The chain runs to 87 residues: Putative RNase MJ1548 (87 aa).

Catalysis depends on residues arginine 65 and histidine 70. Residues 65 to 72 carry the RX(4)HXY motif motif; it reads RNAIVHKY. The residue at position 72 (tyrosine 72) is an O-di-AMP-tyrosine.

The protein belongs to the HepT RNase toxin family. Homodimer, probably forms a complex with cognate antitoxin MJ1547. In terms of processing, modified by cognate antitoxin MJ1547; probably at least 2 successive AMPylation events occur on Tyr-72.

Its function is as follows. Probable toxic component of a putative type VII toxin-antitoxin (TA) system, probably an RNase. Probably neutralized by cognate antitoxin MJ1547. Neutralization may be due to AMPylation by antitoxin MJ1547. This chain is Putative RNase MJ1548, found in Methanocaldococcus jannaschii (strain ATCC 43067 / DSM 2661 / JAL-1 / JCM 10045 / NBRC 100440) (Methanococcus jannaschii).